A 131-amino-acid polypeptide reads, in one-letter code: Small ribosomal subunit protein bS6 (131 aa).

Positions serine 100–glutamate 131 are disordered. Positions lysine 104 to phenylalanine 116 are enriched in basic and acidic residues. Residues threonine 120 to glutamate 131 show a composition bias toward acidic residues.

It belongs to the bacterial ribosomal protein bS6 family.

Binds together with bS18 to 16S ribosomal RNA. The sequence is that of Small ribosomal subunit protein bS6 from Erwinia tasmaniensis (strain DSM 17950 / CFBP 7177 / CIP 109463 / NCPPB 4357 / Et1/99).